We begin with the raw amino-acid sequence, 251 residues long: Probable transcriptional regulatory protein Blon_1155/BLIJ_1182 (251 aa).

The protein belongs to the TACO1 family.

The protein resides in the cytoplasm. This is Probable transcriptional regulatory protein Blon_1155/BLIJ_1182 from Bifidobacterium longum subsp. infantis (strain ATCC 15697 / DSM 20088 / JCM 1222 / NCTC 11817 / S12).